Reading from the N-terminus, the 514-residue chain is ATP synthase subunit alpha (514 aa).

170 to 177 (GDRQIGKS) lines the ATP pocket.

It belongs to the ATPase alpha/beta chains family. F-type ATPases have 2 components, CF(1) - the catalytic core - and CF(0) - the membrane proton channel. CF(1) has five subunits: alpha(3), beta(3), gamma(1), delta(1), epsilon(1). CF(0) has three main subunits: a(1), b(2) and c(9-12). The alpha and beta chains form an alternating ring which encloses part of the gamma chain. CF(1) is attached to CF(0) by a central stalk formed by the gamma and epsilon chains, while a peripheral stalk is formed by the delta and b chains.

It is found in the cell inner membrane. It catalyses the reaction ATP + H2O + 4 H(+)(in) = ADP + phosphate + 5 H(+)(out). Its function is as follows. Produces ATP from ADP in the presence of a proton gradient across the membrane. The alpha chain is a regulatory subunit. The sequence is that of ATP synthase subunit alpha from Chromohalobacter salexigens (strain ATCC BAA-138 / DSM 3043 / CIP 106854 / NCIMB 13768 / 1H11).